The sequence spans 182 residues: Oligoribonuclease (182 aa).

Residues 7–170 (LIWIDLEMTG…EDIRESVEEL (164 aa)) form the Exonuclease domain. The active site involves Y128.

The protein belongs to the oligoribonuclease family.

The protein localises to the cytoplasm. In terms of biological role, 3'-to-5' exoribonuclease specific for small oligoribonucleotides. The polypeptide is Oligoribonuclease (Hahella chejuensis (strain KCTC 2396)).